The chain runs to 421 residues: Protein ECERIFERUM 2 (421 aa).

Met1 bears the N-acetylmethionine mark.

Belongs to the plant acyltransferase family. Expressed at high levels in the epidermis of stems and young siliques. Expressed in flowers.

It is found in the endoplasmic reticulum. The protein localises to the nucleus. Involved in biosynthesis of the epicuticular wax. Plays a role in very-long-chain fatty acid (VLCFA) biosynthesis and is required for C28 fatty acid elongation in stem. Despite its classification as a BAHD acyltransferase based on sequence homology, CER2 does not seem to share the catalytic mechanism of the members of the BAHD family. This Arabidopsis thaliana (Mouse-ear cress) protein is Protein ECERIFERUM 2 (CER2).